A 396-amino-acid chain; its full sequence is DNA replication and repair protein RecF (396 aa).

30–37 (GANGSGKT) contacts ATP.

Belongs to the RecF family.

Its subcellular location is the cytoplasm. Functionally, the RecF protein is involved in DNA metabolism; it is required for DNA replication and normal SOS inducibility. RecF binds preferentially to single-stranded, linear DNA. It also seems to bind ATP. The chain is DNA replication and repair protein RecF from Thermomicrobium roseum (strain ATCC 27502 / DSM 5159 / P-2).